Consider the following 178-residue polypeptide: Lipid A deacylase PagL (178 aa).

A signal peptide spans 1–19 (MQFLKKNKPLFGIVTLALA). Residues H154, S156, and D168 each act as charge relay system in the active site.

This sequence belongs to the PagL family. Homodimer.

It is found in the cell outer membrane. It catalyses the reaction a 3-(acyloxy)acyl derivative of bacterial toxin + H2O = a 3-hydroxyacyl derivative of bacterial toxin + a fatty acid + H(+). Its function is as follows. Has lipid A 3-O-deacylase activity. Hydrolyzes the ester bond at the 3 position of lipid A, a bioactive component of lipopolysaccharide (LPS), thereby releasing the primary fatty acyl moiety. The sequence is that of Lipid A deacylase PagL from Bordetella bronchiseptica (strain ATCC BAA-588 / NCTC 13252 / RB50) (Alcaligenes bronchisepticus).